The primary structure comprises 291 residues: 4-diphosphocytidyl-2-C-methyl-D-erythritol kinase (291 aa).

The active site involves Lys-11. Residue 97-107 (PVAAGIGGGSS) participates in ATP binding. Residue Asp-139 is part of the active site.

The protein belongs to the GHMP kinase family. IspE subfamily.

The enzyme catalyses 4-CDP-2-C-methyl-D-erythritol + ATP = 4-CDP-2-C-methyl-D-erythritol 2-phosphate + ADP + H(+). It participates in isoprenoid biosynthesis; isopentenyl diphosphate biosynthesis via DXP pathway; isopentenyl diphosphate from 1-deoxy-D-xylulose 5-phosphate: step 3/6. In terms of biological role, catalyzes the phosphorylation of the position 2 hydroxy group of 4-diphosphocytidyl-2C-methyl-D-erythritol. The polypeptide is 4-diphosphocytidyl-2-C-methyl-D-erythritol kinase (Methylorubrum extorquens (strain PA1) (Methylobacterium extorquens)).